Reading from the N-terminus, the 453-residue chain is Ribulose bisphosphate carboxylase large chain (453 aa).

The propeptide occupies 1–2 (MS). Residue P3 is modified to N-acetylproline. K14 carries the post-translational modification N6,N6,N6-trimethyllysine. Residues N123 and T173 each coordinate substrate. K175 acts as the Proton acceptor in catalysis. A substrate-binding site is contributed by K177. Residues K201, D203, and E204 each coordinate Mg(2+). K201 bears the N6-carboxylysine mark. H294 acts as the Proton acceptor in catalysis. The substrate site is built by R295, H327, and S379.

It belongs to the RuBisCO large chain family. Type I subfamily. Heterohexadecamer of 8 large chains and 8 small chains; disulfide-linked. The disulfide link is formed within the large subunit homodimers. Requires Mg(2+) as cofactor. In terms of processing, the disulfide bond which can form in the large chain dimeric partners within the hexadecamer appears to be associated with oxidative stress and protein turnover.

It is found in the plastid. The protein resides in the chloroplast. It catalyses the reaction 2 (2R)-3-phosphoglycerate + 2 H(+) = D-ribulose 1,5-bisphosphate + CO2 + H2O. The enzyme catalyses D-ribulose 1,5-bisphosphate + O2 = 2-phosphoglycolate + (2R)-3-phosphoglycerate + 2 H(+). Functionally, ruBisCO catalyzes two reactions: the carboxylation of D-ribulose 1,5-bisphosphate, the primary event in carbon dioxide fixation, as well as the oxidative fragmentation of the pentose substrate in the photorespiration process. Both reactions occur simultaneously and in competition at the same active site. The chain is Ribulose bisphosphate carboxylase large chain from Valantia muralis (Wall valantia).